The primary structure comprises 509 residues: Dihydrolipoyl dehydrogenase, mitochondrial (509 aa).

The N-terminal 35 residues, 1–35 (MQSWSRVYCSLVKRGHFSRISHGLQGVSVVPLRTY), are a transit peptide targeting the mitochondrion. Lysine 66 is modified (N6-acetyllysine; alternate). Lysine 66 is subject to N6-succinyllysine; alternate. FAD-binding positions include 71-80 (EKNETLGGTC) and lysine 89. Cysteine 80 and cysteine 85 are joined by a disulfide. An N6-acetyllysine; alternate mark is found at lysine 104, lysine 122, lysine 132, and lysine 143. N6-succinyllysine; alternate occurs at positions 104, 122, 132, and 143. Residue glycine 154 participates in FAD binding. N6-succinyllysine is present on residues lysine 159 and lysine 166. 183–185 (TGS) contributes to the FAD binding site. NAD(+) is bound by residues 220–227 (GAGVIGVE) and glutamate 243. N6-succinyllysine occurs at positions 273 and 277. Valine 278 lines the NAD(+) pocket. Phosphoserine occurs at positions 285 and 297. Glycine 314 is an NAD(+) binding site. Lysine 346 carries the N6-acetyllysine modification. FAD is bound by residues aspartate 355 and 361–364 (MLAH). An N6-acetyllysine; alternate modification is found at lysine 410. Lysine 410 is modified (N6-succinyllysine; alternate). Residues lysine 417 and lysine 420 each carry the N6-acetyllysine modification. An N6-succinyllysine modification is found at lysine 430. Histidine 487 functions as the Proton acceptor in the catalytic mechanism. Position 505 is an N6-acetyllysine; alternate (lysine 505). Lysine 505 bears the N6-succinyllysine; alternate mark.

It belongs to the class-I pyridine nucleotide-disulfide oxidoreductase family. As to quaternary structure, homodimer. Part of the multimeric pyruvate dehydrogenase complex that contains multiple copies of pyruvate dehydrogenase (subunits PDHA (PDHA1 or PDHA2) and PDHB, E1), dihydrolipoamide acetyltransferase (DLAT, E2) and lipoamide dehydrogenase (DLD, E3). These subunits are bound to an inner core composed of about 48 DLAT and 12 PDHX molecules (by non covalent bonds). The 2-oxoglutarate dehydrogenase complex is composed of OGDH (2-oxoglutarate dehydrogenase; E1), DLST (dihydrolipoamide succinyltransferase; E2), DLD (dihydrolipoamide dehydrogenase; E3) and the assembly factor KGD4. It contains multiple copies of the three enzymatic components (E1, E2 and E3). In the nucleus, the 2-oxoglutarate dehydrogenase complex associates with KAT2A. Interacts with PDHX. It depends on FAD as a cofactor. Tyrosine phosphorylated.

It is found in the mitochondrion matrix. It localises to the nucleus. Its subcellular location is the cell projection. The protein localises to the cilium. The protein resides in the flagellum. It is found in the cytoplasmic vesicle. It localises to the secretory vesicle. Its subcellular location is the acrosome. It catalyses the reaction N(6)-[(R)-dihydrolipoyl]-L-lysyl-[protein] + NAD(+) = N(6)-[(R)-lipoyl]-L-lysyl-[protein] + NADH + H(+). Functionally, lipoamide dehydrogenase is a component of the glycine cleavage system as well as an E3 component of three alpha-ketoacid dehydrogenase complexes (pyruvate-, alpha-ketoglutarate-, and branched-chain amino acid-dehydrogenase complex). The 2-oxoglutarate dehydrogenase complex is mainly active in the mitochondrion. A fraction of the 2-oxoglutarate dehydrogenase complex also localizes in the nucleus and is required for lysine succinylation of histones: associates with KAT2A on chromatin and provides succinyl-CoA to histone succinyltransferase KAT2A. In monomeric form may have additional moonlighting function as serine protease. Involved in the hyperactivation of spermatazoa during capacitation and in the spermatazoal acrosome reaction. This chain is Dihydrolipoyl dehydrogenase, mitochondrial (DLD), found in Bos taurus (Bovine).